Consider the following 519-residue polypeptide: FAD-dependent monooxygenase macF (519 aa).

The signal sequence occupies residues 1–20 (MTKMTSIIGILMGVLTTATA). The 175-residue stretch at 88–262 (CRLNASCIVT…TEYDLTTNTG (175 aa)) folds into the FAD-binding PCMH-type domain. At His-125 the chain carries Pros-8alpha-FAD histidine.

It belongs to the oxygen-dependent FAD-linked oxidoreductase family.

The protein operates within secondary metabolite biosynthesis; terpenoid biosynthesis. Functionally, FAD-dependent monooxygenase; part of the gene cluster that mediates the biosynthesis of macrophorins, isoprenoid epoxycyclohexenones containing cyclized drimane moieties. The first step of the pathway is the synthesis of 6-methylsalicylic acid (6-MSA) by the polyketide synthase macA. 6-MSA is then converted to m-cresol by the decarboxylase macB. The cytochrome P450 monooxygenase macC then catalyzes the oxidation of m-cresol to toluquinol. Epoxidation of toluquinol is then performed by the short chain dehydrogenase macD, with the help of macE, and a further prenylation by macG leads to 7-deacetoxyyanuthone A. The next step is the hydroxylation of C-22 of 7-deacetoxyyanuthone A by the cytochrome P450 monooxygenase macH to yield 22-deacetylyanuthone A. O-Mevalon transferase macI then attaches mevalon to the hydroxyl group of 22-deacetylyanuthone A to produce yanuthone E. The terpene cyclase macJ catalyzes the cyclization of 22-deacetylyanuthone A to macrophorin A. MacJ is also able to catalyze cyclization of yanuthone E and 7-deacetoxyyanuthone A to their corresponding macrophorins. The macJ products can be further modified by macH and macJ, as well as by the FAD-dependent monooxygenase macF, to produce additional macrophorins, including 4'-oxomacrophorin A, 4'-oxomacrophorin D and 4'-oxomacrophorin E. This chain is FAD-dependent monooxygenase macF, found in Penicillium terrestre.